Consider the following 236-residue polypeptide: Phosphoribosylaminoimidazole-succinocarboxamide synthase (236 aa).

This sequence belongs to the SAICAR synthetase family.

It carries out the reaction 5-amino-1-(5-phospho-D-ribosyl)imidazole-4-carboxylate + L-aspartate + ATP = (2S)-2-[5-amino-1-(5-phospho-beta-D-ribosyl)imidazole-4-carboxamido]succinate + ADP + phosphate + 2 H(+). It participates in purine metabolism; IMP biosynthesis via de novo pathway; 5-amino-1-(5-phospho-D-ribosyl)imidazole-4-carboxamide from 5-amino-1-(5-phospho-D-ribosyl)imidazole-4-carboxylate: step 1/2. The protein is Phosphoribosylaminoimidazole-succinocarboxamide synthase of Pseudomonas entomophila (strain L48).